We begin with the raw amino-acid sequence, 362 residues long: Protein MGF 360-2L (362 aa).

This sequence belongs to the asfivirus MGF 360 family.

Its function is as follows. Plays a role in virus cell tropism, and may be required for efficient virus replication in macrophages. The chain is Protein MGF 360-2L from African swine fever virus (strain Badajoz 1971 Vero-adapted) (Ba71V).